A 378-amino-acid polypeptide reads, in one-letter code: Protein RecA (378 aa).

An ATP-binding site is contributed by 79–86 (GPESSGKT).

It belongs to the RecA family.

It is found in the cytoplasm. Can catalyze the hydrolysis of ATP in the presence of single-stranded DNA, the ATP-dependent uptake of single-stranded DNA by duplex DNA, and the ATP-dependent hybridization of homologous single-stranded DNAs. It interacts with LexA causing its activation and leading to its autocatalytic cleavage. In Streptococcus pyogenes serotype M28 (strain MGAS6180), this protein is Protein RecA.